The chain runs to 313 residues: MKLVPRFRKQWFAYLTVLCLALAAAVSFGVPAKAAENPQTSVSNTGKEADATKNQTSKADQVSAPYEGTGKTSKSLYGGQTELEKNIQTLQPSSIIGTDERTRISSTTSFPYRATVQLSIKYPNTSSTYGCTGFLVNPNTVVTAGHCVYSQDHGWASTITAAPGRNGSSYPYGTYSGTMFYSVKGWTESKDTNYDYGAIKLNGSPGNTVGWYGYRTTNSSSPVGLSSSVTGFPCDKTFGTMWSDTKPIRSAETYKLTYTTDTYGCQSGSPVYRNYSDTGQTAIAIHTNGGSSYNLGTRVTNDVFNNIQYWANQ.

Positions 1–34 are cleaved as a signal peptide; sequence MKLVPRFRKQWFAYLTVLCLALAAAVSFGVPAKA. The interval 35 to 74 is disordered; it reads AENPQTSVSNTGKEADATKNQTSKADQVSAPYEGTGKTSK. Residues 35-93 constitute a propeptide that is removed on maturation; it reads AENPQTSVSNTGKEADATKNQTSKADQVSAPYEGTGKTSKSLYGGQTELEKNIQTLQPS. A compositionally biased stretch (polar residues) spans 37–60; sequence NPQTSVSNTGKEADATKNQTSKAD. Cys131 and Cys147 are oxidised to a cystine. Catalysis depends on charge relay system residues His146 and Ser267.

The protein belongs to the peptidase S1B family. As to quaternary structure, monomer.

Its subcellular location is the secreted. In Bacillus subtilis (strain 168), this protein is Extracellular metalloprotease (mpr).